Consider the following 231-residue polypeptide: uncharacterized protein (231 aa).

5 helical membrane passes run 36 to 56, 58 to 78, 83 to 103, 143 to 163, and 170 to 190; these read SLLA…SFFI, SQVT…ALQW, APLN…TLTP, FTVM…ASLL, and SIVN…YILY.

It belongs to the BI1 family.

The protein localises to the cell membrane. This is an uncharacterized protein from Campylobacter jejuni subsp. jejuni serotype O:2 (strain ATCC 700819 / NCTC 11168).